Consider the following 195-residue polypeptide: UPF0215 protein TK2033 (195 aa).

Belongs to the UPF0215 family.

In Thermococcus kodakarensis (strain ATCC BAA-918 / JCM 12380 / KOD1) (Pyrococcus kodakaraensis (strain KOD1)), this protein is UPF0215 protein TK2033.